We begin with the raw amino-acid sequence, 294 residues long: Protein RarD (294 aa).

At 1–11 (MDAKQTRQGVL) the chain is on the cytoplasmic side. A helical membrane pass occupies residues 12–34 (LALAAYFIWGIAPAYFKLIYYVP). One can recognise an EamA domain in the interval 18–145 (FIWGIAPAYF…AVCGVLVQLW (128 aa)). Residues 35-37 (ADE) are Periplasmic-facing. A helical transmembrane segment spans residues 38 to 60 (ILTHRVIWSFFFMVALLSVSRQW). Residues 61–72 (RQVKRLLKTPKK) lie on the Cytoplasmic side of the membrane. Residues 73 to 95 (IFLLALSAVLVGGNWLLFIWAVN) form a helical membrane-spanning segment. The Periplasmic segment spans residues 96–99 (NHHM). A helical membrane pass occupies residues 100–122 (LEASLGYFINPLVNILLGMIFLG). Topologically, residues 123 to 128 (ERFRRM) are cytoplasmic. Residues 129 to 146 (QWLAVILAVCGVLVQLWT) form a helical membrane-spanning segment. The Periplasmic portion of the chain corresponds to 147 to 149 (FGS). Residues 150 to 167 (LPIIALGLAFSFAFYGLV) form a helical membrane-spanning segment. The Cytoplasmic segment spans residues 168–179 (RKKIAVEAQTGM). The helical transmembrane segment at 180-197 (LVETLWLLPVAAIYLFGI) threads the bilayer. At 198–211 (ADSPTSHMGQNALS) the chain is on the periplasmic side. The chain crosses the membrane as a helical span at residues 212-234 (LNLLLMAAGVVTTIPLLCFTGAA). The Cytoplasmic portion of the chain corresponds to 235–238 (TRLR). A helical transmembrane segment spans residues 239 to 261 (LSTLGFFQYIGPTLMFLLAVTFY). Residues 262 to 270 (GEVPGADKM) are Periplasmic-facing. A helical transmembrane segment spans residues 271-290 (VTFAFIWVALAIFVMDAIYT). Residues 291–294 (QRKK) are Cytoplasmic-facing.

This sequence belongs to the EamA transporter family.

It is found in the cell inner membrane. The polypeptide is Protein RarD (rarD) (Salmonella typhimurium (strain LT2 / SGSC1412 / ATCC 700720)).